The primary structure comprises 228 residues: Cytochrome c oxidase subunit 2 (228 aa).

Topologically, residues 1–26 (MRTWSNFNLQNSASPLMEQIIFFHDH) are mitochondrial intermembrane. The chain crosses the membrane as a helical span at residues 27–48 (TLIILIMITILVGYIMINLFFN). Topologically, residues 49 to 62 (KFINRFFLVGQMIE) are mitochondrial matrix. The chain crosses the membrane as a helical span at residues 63 to 82 (LIWTVLPAITLIFIALPSLR). Residues 83-228 (LLYLLDELNN…FINWINNYSY (146 aa)) lie on the Mitochondrial intermembrane side of the membrane. Residues His-161, Cys-196, Glu-198, Cys-200, His-204, and Met-207 each coordinate Cu cation. Glu-198 is a binding site for Mg(2+).

Belongs to the cytochrome c oxidase subunit 2 family. In terms of assembly, component of the cytochrome c oxidase (complex IV, CIV), a multisubunit enzyme composed of a catalytic core of 3 subunits and several supernumerary subunits. The complex exists as a monomer or a dimer and forms supercomplexes (SCs) in the inner mitochondrial membrane with ubiquinol-cytochrome c oxidoreductase (cytochrome b-c1 complex, complex III, CIII). It depends on Cu cation as a cofactor.

The protein localises to the mitochondrion inner membrane. The catalysed reaction is 4 Fe(II)-[cytochrome c] + O2 + 8 H(+)(in) = 4 Fe(III)-[cytochrome c] + 2 H2O + 4 H(+)(out). In terms of biological role, component of the cytochrome c oxidase, the last enzyme in the mitochondrial electron transport chain which drives oxidative phosphorylation. The respiratory chain contains 3 multisubunit complexes succinate dehydrogenase (complex II, CII), ubiquinol-cytochrome c oxidoreductase (cytochrome b-c1 complex, complex III, CIII) and cytochrome c oxidase (complex IV, CIV), that cooperate to transfer electrons derived from NADH and succinate to molecular oxygen, creating an electrochemical gradient over the inner membrane that drives transmembrane transport and the ATP synthase. Cytochrome c oxidase is the component of the respiratory chain that catalyzes the reduction of oxygen to water. Electrons originating from reduced cytochrome c in the intermembrane space (IMS) are transferred via the dinuclear copper A center (CU(A)) of subunit 2 and heme A of subunit 1 to the active site in subunit 1, a binuclear center (BNC) formed by heme A3 and copper B (CU(B)). The BNC reduces molecular oxygen to 2 water molecules using 4 electrons from cytochrome c in the IMS and 4 protons from the mitochondrial matrix. This is Cytochrome c oxidase subunit 2 (COII) from Galleria mellonella (Greater wax moth).